Here is a 558-residue protein sequence, read N- to C-terminus: Formate--tetrahydrofolate ligase (558 aa).

66–73 serves as a coordination point for ATP; sequence TPAGEGKT.

This sequence belongs to the formate--tetrahydrofolate ligase family.

The enzyme catalyses (6S)-5,6,7,8-tetrahydrofolate + formate + ATP = (6R)-10-formyltetrahydrofolate + ADP + phosphate. It participates in one-carbon metabolism; tetrahydrofolate interconversion. This is Formate--tetrahydrofolate ligase from Neisseria meningitidis serogroup A / serotype 4A (strain DSM 15465 / Z2491).